Reading from the N-terminus, the 81-residue chain is Cytotoxin 3d (81 aa).

The signal sequence occupies residues 1–21 (MKTLLLTLVVVTIVCLDLGYT). 4 disulfides stabilise this stretch: Cys-24–Cys-42, Cys-35–Cys-59, Cys-63–Cys-74, and Cys-75–Cys-80.

The protein belongs to the three-finger toxin family. Short-chain subfamily. Type IA cytotoxin sub-subfamily. Monomer in solution; Homodimer and oligomer in the presence of negatively charged lipids forming a pore with a size ranging between 20 and 30 Angstroms. As to expression, expressed by the venom gland.

The protein resides in the secreted. It localises to the target cell membrane. Its function is as follows. Shows cytolytic activity on many different cells by forming pore in lipid membranes. In vivo, increases heart rate or kills the animal by cardiac arrest. In addition, it binds to heparin with high affinity, interacts with Kv channel-interacting protein 1 (KCNIP1) in a calcium-independent manner, and binds to integrin alpha-V/beta-3 (ITGAV/ITGB3) with moderate affinity. The polypeptide is Cytotoxin 3d (Naja atra (Chinese cobra)).